We begin with the raw amino-acid sequence, 274 residues long: Acetyl-coenzyme A carboxylase carboxyl transferase subunit alpha (274 aa).

In terms of domain architecture, CoA carboxyltransferase C-terminal spans 2–250 (NKEFIKSIVV…KKEIMNAMNE (249 aa)).

It belongs to the AccA family. In terms of assembly, acetyl-CoA carboxylase is a heterohexamer composed of biotin carboxyl carrier protein (AccB), biotin carboxylase (AccC) and two subunits each of ACCase subunit alpha (AccA) and ACCase subunit beta (AccD).

It localises to the cytoplasm. The catalysed reaction is N(6)-carboxybiotinyl-L-lysyl-[protein] + acetyl-CoA = N(6)-biotinyl-L-lysyl-[protein] + malonyl-CoA. It functions in the pathway lipid metabolism; malonyl-CoA biosynthesis; malonyl-CoA from acetyl-CoA: step 1/1. Functionally, component of the acetyl coenzyme A carboxylase (ACC) complex. First, biotin carboxylase catalyzes the carboxylation of biotin on its carrier protein (BCCP) and then the CO(2) group is transferred by the carboxyltransferase to acetyl-CoA to form malonyl-CoA. This chain is Acetyl-coenzyme A carboxylase carboxyl transferase subunit alpha, found in Clostridium botulinum (strain Alaska E43 / Type E3).